Reading from the N-terminus, the 517-residue chain is MNSTEVDNLPFQQQLTSFVELAVAKATGSPITTLFTIIFLILSYDQLSYQINKGSIAGPRFKFYPIIGPFLESLDPKFEEYKAKWDSGELSCVSIFHKFVVIASSRDLARKILSSPKYVKPCVVDVAIKILRPTNWVFLDGKQHTDYRRSLNGLFSSKALEIYIPVQEKYMDIYLERFCKYDGPREFFPEFRELLCALSLRTFCGDYITEDQIALVADNYYRVTAALELVNFPIIIPYTKTWYGKKIADDTMKIFENCAAMAKKHINENNGTPKCVMDEWIHLMKEAREKHSEDPDSKLLVREFSNREISEAIFTFLFASQDASSSLACWLFQIVADRPDIVAKIREEQLRVRNNNPDVRLSLDLINEMTYTNNVVKESLRYRPPVLMVPYVVKKSFPVTESYTAPKGAMIIPTLYPALHDPEVYDEPDSFIPERWENASGDMYKRNWLVFGTGPHVCLGKNYVLMLFTGMLGKFVMNSDMIHHKTDLSEEIKVFATIFPKDDLILEWKKRDPLKSL.

The helical transmembrane segment at 21 to 41 (LAVAKATGSPITTLFTIIFLI) threads the bilayer. Residue cysteine 458 participates in heme binding.

It belongs to the cytochrome P450 family. Heme is required as a cofactor.

It is found in the endoplasmic reticulum membrane. The enzyme catalyses 5-dehydroepisterol + NADPH + O2 + H(+) = ergosta-5,7,22,24(28)-tetraen-3beta-ol + NADP(+) + 2 H2O. Its pathway is steroid metabolism; ergosterol biosynthesis; ergosterol from zymosterol: step 4/5. In terms of biological role, C-22 sterol desaturase; part of the third module of ergosterol biosynthesis pathway that includes the late steps of the pathway. ERG5 converts 5-dehydroepisterol into ergosta-5,7,22,24(28)-tetraen-3beta-ol by forming the C-22(23) double bond in the sterol side chain. The third module or late pathway involves the ergosterol synthesis itself through consecutive reactions that mainly occur in the endoplasmic reticulum (ER) membrane. Firstly, the squalene synthase ERG9 catalyzes the condensation of 2 farnesyl pyrophosphate moieties to form squalene, which is the precursor of all steroids. Squalene synthase is crucial for balancing the incorporation of farnesyl diphosphate (FPP) into sterol and nonsterol isoprene synthesis. Secondly, the squalene epoxidase ERG1 catalyzes the stereospecific oxidation of squalene to (S)-2,3-epoxysqualene, which is considered to be a rate-limiting enzyme in steroid biosynthesis. Then, the lanosterol synthase ERG7 catalyzes the cyclization of (S)-2,3 oxidosqualene to lanosterol, a reaction that forms the sterol core. In the next steps, lanosterol is transformed to zymosterol through a complex process involving various demethylation, reduction and desaturation reactions. The lanosterol 14-alpha-demethylase ERG11 (also known as CYP51) catalyzes C14-demethylation of lanosterol to produce 4,4'-dimethyl cholesta-8,14,24-triene-3-beta-ol, which is critical for ergosterol biosynthesis. The C-14 reductase ERG24 reduces the C14=C15 double bond of 4,4-dimethyl-cholesta-8,14,24-trienol to produce 4,4-dimethyl-cholesta-8,24-dienol. 4,4-dimethyl-cholesta-8,24-dienol is substrate of the C-4 demethylation complex ERG25-ERG26-ERG27 in which ERG25 catalyzes the three-step monooxygenation required for the demethylation of 4,4-dimethyl and 4alpha-methylsterols, ERG26 catalyzes the oxidative decarboxylation that results in a reduction of the 3-beta-hydroxy group at the C-3 carbon to an oxo group, and ERG27 is responsible for the reduction of the keto group on the C-3. ERG28 has a role as a scaffold to help anchor ERG25, ERG26 and ERG27 to the endoplasmic reticulum and ERG29 regulates the activity of the iron-containing C4-methylsterol oxidase ERG25. Then, the sterol 24-C-methyltransferase ERG6 catalyzes the methyl transfer from S-adenosyl-methionine to the C-24 of zymosterol to form fecosterol. The C-8 sterol isomerase ERG2 catalyzes the reaction which results in unsaturation at C-7 in the B ring of sterols and thus converts fecosterol to episterol. The sterol-C5-desaturase ERG3 then catalyzes the introduction of a C-5 double bond in the B ring to produce 5-dehydroepisterol. The C-22 sterol desaturase ERG5 further converts 5-dehydroepisterol into ergosta-5,7,22,24(28)-tetraen-3beta-ol by forming the C-22(23) double bond in the sterol side chain. Finally, ergosta-5,7,22,24(28)-tetraen-3beta-ol is substrate of the C-24(28) sterol reductase ERG4 to produce ergosterol. The polypeptide is C-22 sterol desaturase ERG5 (Candida albicans (strain SC5314 / ATCC MYA-2876) (Yeast)).